Here is a 112-residue protein sequence, read N- to C-terminus: Larval cuticle protein III/IV (112 aa).

Residues 1 to 16 form the signal peptide; that stretch reads MFKILLVCALAALVAA. Residues 31 to 92 form the Chitin-binding type R&amp;R domain; that stretch reads PDGFKTVVSL…PSSDLLPVAP (62 aa).

Its function is as follows. Component of the larval cuticle. The chain is Larval cuticle protein III/IV (Lcp3) from Drosophila miranda (Fruit fly).